Consider the following 239-residue polypeptide: tRNA (guanine-N(7)-)-methyltransferase (239 aa).

Residues E69, E94, D121, and D144 each coordinate S-adenosyl-L-methionine. D144 is an active-site residue. K148 is a binding site for substrate. The tract at residues 150–155 (RHNKRR) is interaction with RNA. Substrate contacts are provided by residues D180 and 217–220 (TKFE).

This sequence belongs to the class I-like SAM-binding methyltransferase superfamily. TrmB family. In terms of assembly, monomer.

It carries out the reaction guanosine(46) in tRNA + S-adenosyl-L-methionine = N(7)-methylguanosine(46) in tRNA + S-adenosyl-L-homocysteine. Its pathway is tRNA modification; N(7)-methylguanine-tRNA biosynthesis. Its function is as follows. Catalyzes the formation of N(7)-methylguanine at position 46 (m7G46) in tRNA. The chain is tRNA (guanine-N(7)-)-methyltransferase from Salmonella typhi.